Reading from the N-terminus, the 177-residue chain is B-phycoerythrin beta chain (177 aa).

Cys50 and Cys61 together coordinate phycourobilin. Asn72 bears the N4-methylasparagine mark. The (2R,3E)-phycoerythrobilin site is built by Cys82 and Cys158.

The protein belongs to the phycobiliprotein family. Heteromer of 6 alpha, 6 beta and one gamma chain. In terms of processing, contains two covalently linked phycoerythrobilin chromophores and one covalently linked phycourobilin chromophore.

It is found in the plastid. It localises to the chloroplast thylakoid membrane. Functionally, light-harvesting photosynthetic bile pigment-protein from the phycobiliprotein complex. The sequence is that of B-phycoerythrin beta chain (cpeB) from Rhodella violacea (Red alga).